Consider the following 118-residue polypeptide: Small ribosomal subunit protein bS6 (118 aa).

It belongs to the bacterial ribosomal protein bS6 family.

Its function is as follows. Binds together with bS18 to 16S ribosomal RNA. The sequence is that of Small ribosomal subunit protein bS6 from Parabacteroides distasonis (strain ATCC 8503 / DSM 20701 / CIP 104284 / JCM 5825 / NCTC 11152).